We begin with the raw amino-acid sequence, 276 residues long: Protease HtpX homolog (276 aa).

A helical transmembrane segment spans residues 16-36 (LFIWFGGMIAGQTGMVIAFLV). Residue His-130 coordinates Zn(2+). Residue Glu-131 is part of the active site. His-134 is a binding site for Zn(2+). A run of 2 helical transmembrane segments spans residues 142–162 (IGTV…FGMF) and 173–193 (IFVM…IQMT). Glu-199 serves as a coordination point for Zn(2+).

It belongs to the peptidase M48B family. The cofactor is Zn(2+).

Its subcellular location is the cell inner membrane. This chain is Protease HtpX homolog, found in Sulfurovum sp. (strain NBC37-1).